The following is a 197-amino-acid chain: dITP/XTP pyrophosphatase (197 aa).

8–13 serves as a coordination point for substrate; that stretch reads TGNPGK. Residues E40 and D69 each coordinate Mg(2+). D69 acts as the Proton acceptor in catalysis. Residues S70, 154-157, K177, and 182-183 each bind substrate; these read FGYD and HR.

It belongs to the HAM1 NTPase family. In terms of assembly, homodimer. It depends on Mg(2+) as a cofactor.

It catalyses the reaction XTP + H2O = XMP + diphosphate + H(+). The enzyme catalyses dITP + H2O = dIMP + diphosphate + H(+). It carries out the reaction ITP + H2O = IMP + diphosphate + H(+). Its function is as follows. Pyrophosphatase that catalyzes the hydrolysis of nucleoside triphosphates to their monophosphate derivatives, with a high preference for the non-canonical purine nucleotides XTP (xanthosine triphosphate), dITP (deoxyinosine triphosphate) and ITP. Seems to function as a house-cleaning enzyme that removes non-canonical purine nucleotides from the nucleotide pool, thus preventing their incorporation into DNA/RNA and avoiding chromosomal lesions. The chain is dITP/XTP pyrophosphatase from Photorhabdus laumondii subsp. laumondii (strain DSM 15139 / CIP 105565 / TT01) (Photorhabdus luminescens subsp. laumondii).